The chain runs to 620 residues: Arginine--tRNA ligase (620 aa).

The 'HIGH' region signature appears at 147–157; the sequence is ANPTGPIHIGG.

Belongs to the class-I aminoacyl-tRNA synthetase family. As to quaternary structure, monomer.

It localises to the cytoplasm. It catalyses the reaction tRNA(Arg) + L-arginine + ATP = L-arginyl-tRNA(Arg) + AMP + diphosphate. This chain is Arginine--tRNA ligase, found in Bifidobacterium longum (strain NCC 2705).